A 377-amino-acid polypeptide reads, in one-letter code: Probable glucokinase 2 (377 aa).

27–32 (CDVGGS) is an ATP binding site.

Belongs to the bacterial glucokinase family.

The catalysed reaction is D-glucose + ATP = D-glucose 6-phosphate + ADP + H(+). The chain is Probable glucokinase 2 (GK2) from Trichomonas vaginalis.